We begin with the raw amino-acid sequence, 653 residues long: Chaperone protein HtpG (653 aa).

The segment at 1 to 361 (MSETNQVQNH…SNDLPLNVSR (361 aa)) is a; substrate-binding. The segment at 362–578 (EILQDNKVTQ…DDDMSSQMAK (217 aa)) is b. The tract at residues 579-653 (LMASVGQEVP…LNKLMLSLTK (75 aa)) is c.

Belongs to the heat shock protein 90 family. As to quaternary structure, homodimer.

It is found in the cytoplasm. In terms of biological role, molecular chaperone. Has ATPase activity. This is Chaperone protein HtpG from Colwellia psychrerythraea (strain 34H / ATCC BAA-681) (Vibrio psychroerythus).